A 507-amino-acid chain; its full sequence is ATP synthase subunit alpha (507 aa).

168–175 (GDRQTGKT) contacts ATP.

It belongs to the ATPase alpha/beta chains family. In terms of assembly, F-type ATPases have 2 components, CF(1) - the catalytic core - and CF(0) - the membrane proton channel. CF(1) has five subunits: alpha(3), beta(3), gamma(1), delta(1), epsilon(1). CF(0) has three main subunits: a(1), b(2) and c(9-12). The alpha and beta chains form an alternating ring which encloses part of the gamma chain. CF(1) is attached to CF(0) by a central stalk formed by the gamma and epsilon chains, while a peripheral stalk is formed by the delta and b chains.

It localises to the cell membrane. It catalyses the reaction ATP + H2O + 4 H(+)(in) = ADP + phosphate + 5 H(+)(out). Produces ATP from ADP in the presence of a proton gradient across the membrane. The alpha chain is a regulatory subunit. In Mesomycoplasma hyopneumoniae (strain J / ATCC 25934 / NCTC 10110) (Mycoplasma hyopneumoniae), this protein is ATP synthase subunit alpha.